Reading from the N-terminus, the 321-residue chain is MRPTGWRWPVLSLLLVLLPFQAAGPPRPRAAWTRIVSFLTCALTALAASWMTATRTLSNEITHCLTLTRLFRRYTIVNSWLLDRSLREAVLPSKTVTRMAIDQLWWPRKYTSTNGTIWCWGGGPSGISCRWIRINTCASCRTADPSGNARVYTVARPQPPTCCSNGRPRPLFRTFRYRTLPYLINPKRANNGAGPRQRFRNVYPPRLATVSLGRDGNGPVRGISSSPTRLTRPRMGGNTLRVSRTFGPVPCIVPEAKPWTPRVKRRCPLGATSRRLRPQARRGNVCACVVENGYGTAGYVPAAARCRLVRPPVRSTTRFST.

Residues 1-23 form the signal peptide; it reads MRPTGWRWPVLSLLLVLLPFQAA. A RxLR motif is present at residues 84-87; it reads RSLR. Residue Asn114 is glycosylated (N-linked (GlcNAc...) asparagine). Residues 210 to 237 form a disordered region; it reads VSLGRDGNGPVRGISSSPTRLTRPRMGG.

It belongs to the RxLR effector family.

The protein resides in the secreted. It is found in the host cell. Secreted effector that partially suppresses the host cell death induced by cell death-inducing proteins. The sequence is that of Secreted RxLR effector protein 71 from Plasmopara viticola (Downy mildew of grapevine).